A 741-amino-acid polypeptide reads, in one-letter code: Exostosin-1b (741 aa).

The Cytoplasmic portion of the chain corresponds to 1–7 (MQAKKRY). The chain crosses the membrane as a helical; Signal-anchor for type II membrane protein span at residues 8–28 (LISLLTGAFLVLLIYLGGGGV). Residues 29–741 (PGPAAPGSRS…RKKYREIERL (713 aa)) lie on the Lumenal side of the membrane. Asn-84 and Asn-325 each carry an N-linked (GlcNAc...) asparagine glycan. Arg-435, Arg-544, Asp-560, Glu-561, Asp-562, Glu-648, Asp-649, and Arg-696 together coordinate UDP-N-acetyl-alpha-D-glucosamine. Asp-562 lines the Mn(2+) pocket. Cys-647 and Cys-699 are oxidised to a cystine. Asp-649 is a catalytic residue.

Belongs to the glycosyltransferase 47 family. Requires Mn(2+) as cofactor.

It is found in the endoplasmic reticulum membrane. The catalysed reaction is 3-O-{[(1-&gt;4)-beta-D-GlcA-(1-&gt;4)-alpha-D-GlcNAc](n)-(1-&gt;4)-beta-D-GlcA-(1-&gt;3)-beta-D-Gal-(1-&gt;3)-beta-D-Gal-(1-&gt;4)-beta-D-Xyl}-L-seryl-[protein] + UDP-N-acetyl-alpha-D-glucosamine = 3-O-{alpha-D-GlcNAc-[(1-&gt;4)-beta-D-GlcA-(1-&gt;4)-alpha-D-GlcNAc](n)-(1-&gt;4)-beta-D-GlcA-(1-&gt;3)-beta-D-Gal-(1-&gt;3)-beta-D-Gal-(1-&gt;4)-beta-D-Xyl}-L-seryl-[protein] + UDP + H(+). It carries out the reaction 3-O-{alpha-D-GlcNAc-[(1-&gt;4)-beta-D-GlcA-(1-&gt;4)-alpha-D-GlcNAc](n)-(1-&gt;4)-beta-D-GlcA-(1-&gt;3)-beta-D-Gal-(1-&gt;3)-beta-D-Gal-(1-&gt;4)-beta-D-Xyl}-L-seryl-[protein] + UDP-alpha-D-glucuronate = 3-O-{[(1-&gt;4)-beta-D-GlcA-(1-&gt;4)-alpha-D-GlcNAc](n+1)-(1-&gt;4)-beta-D-GlcA-(1-&gt;3)-beta-D-Gal-(1-&gt;3)-beta-D-Gal-(1-&gt;4)-beta-D-Xyl}-L-seryl-[protein] + UDP + H(+). Its pathway is protein modification; protein glycosylation. In terms of biological role, glycosyltransferase required for the biosynthesis of heparan-sulfate. The polypeptide is Exostosin-1b (ext1b) (Danio rerio (Zebrafish)).